We begin with the raw amino-acid sequence, 131 residues long: D-ribose pyranase (131 aa).

His20 (proton donor) is an active-site residue. Substrate is bound by residues Asp28, His98, and 120–122; that span reads YSN.

This sequence belongs to the RbsD / FucU family. RbsD subfamily. In terms of assembly, homodecamer.

The protein localises to the cytoplasm. It carries out the reaction beta-D-ribopyranose = beta-D-ribofuranose. It functions in the pathway carbohydrate metabolism; D-ribose degradation; D-ribose 5-phosphate from beta-D-ribopyranose: step 1/2. Catalyzes the interconversion of beta-pyran and beta-furan forms of D-ribose. The protein is D-ribose pyranase of Lactiplantibacillus plantarum (strain ATCC BAA-793 / NCIMB 8826 / WCFS1) (Lactobacillus plantarum).